Here is a 250-residue protein sequence, read N- to C-terminus: 3-deoxy-manno-octulosonate cytidylyltransferase (250 aa).

Belongs to the KdsB family.

It localises to the cytoplasm. It carries out the reaction 3-deoxy-alpha-D-manno-oct-2-ulosonate + CTP = CMP-3-deoxy-beta-D-manno-octulosonate + diphosphate. The protein operates within nucleotide-sugar biosynthesis; CMP-3-deoxy-D-manno-octulosonate biosynthesis; CMP-3-deoxy-D-manno-octulosonate from 3-deoxy-D-manno-octulosonate and CTP: step 1/1. It participates in bacterial outer membrane biogenesis; lipopolysaccharide biosynthesis. Activates KDO (a required 8-carbon sugar) for incorporation into bacterial lipopolysaccharide in Gram-negative bacteria. The polypeptide is 3-deoxy-manno-octulosonate cytidylyltransferase (Pectobacterium carotovorum subsp. carotovorum (strain PC1)).